The chain runs to 177 residues: Large ribosomal subunit protein uL5 (177 aa).

It belongs to the universal ribosomal protein uL5 family. In terms of assembly, part of the 50S ribosomal subunit; part of the 5S rRNA/L5/L18/L25 subcomplex. Contacts the 5S rRNA and the P site tRNA. Forms a bridge to the 30S subunit in the 70S ribosome.

Functionally, this is one of the proteins that bind and probably mediate the attachment of the 5S RNA into the large ribosomal subunit, where it forms part of the central protuberance. In the 70S ribosome it contacts protein S13 of the 30S subunit (bridge B1b), connecting the 2 subunits; this bridge is implicated in subunit movement. Contacts the P site tRNA; the 5S rRNA and some of its associated proteins might help stabilize positioning of ribosome-bound tRNAs. In Ehrlichia canis (strain Jake), this protein is Large ribosomal subunit protein uL5.